The primary structure comprises 116 residues: uncharacterized protein (116 aa).

This sequence belongs to the BolA/IbaG family.

It is found in the mitochondrion. This is an uncharacterized protein from Schizosaccharomyces pombe (strain 972 / ATCC 24843) (Fission yeast).